The primary structure comprises 238 residues: Probable transcriptional regulatory protein LACR_0237 (238 aa).

This sequence belongs to the TACO1 family. YeeN subfamily.

The protein localises to the cytoplasm. The protein is Probable transcriptional regulatory protein LACR_0237 of Lactococcus lactis subsp. cremoris (strain SK11).